Reading from the N-terminus, the 362-residue chain is 3-dehydroquinate synthase (362 aa).

NAD(+) contacts are provided by residues Asp-71 to Lys-76, Gly-105 to Asp-109, Thr-129 to Thr-130, Lys-142, Lys-151, and Cys-169 to Thr-172. Zn(2+) is bound by residues Glu-184, His-247, and His-264.

It belongs to the sugar phosphate cyclases superfamily. Dehydroquinate synthase family. It depends on Co(2+) as a cofactor. Zn(2+) serves as cofactor. The cofactor is NAD(+).

It localises to the cytoplasm. It catalyses the reaction 7-phospho-2-dehydro-3-deoxy-D-arabino-heptonate = 3-dehydroquinate + phosphate. Its pathway is metabolic intermediate biosynthesis; chorismate biosynthesis; chorismate from D-erythrose 4-phosphate and phosphoenolpyruvate: step 2/7. Catalyzes the conversion of 3-deoxy-D-arabino-heptulosonate 7-phosphate (DAHP) to dehydroquinate (DHQ). This is 3-dehydroquinate synthase from Escherichia coli O127:H6 (strain E2348/69 / EPEC).